The following is a 96-amino-acid chain: Accessory cholera enterotoxin (96 aa).

The chain crosses the membrane as a helical span at residues 76 to 96 (QALAIVLQALMTRFALRALNL).

Its subcellular location is the secreted. It is found in the host cell membrane. Its function is as follows. Increases short-circuit current in rabbit ileal tissue mounted in Ussing chambers, by increasing the potential difference. Cultures of V.cholerae containing the cloned ace gene cause fluid secretion in ligated rabbit ileal loops. This is Accessory cholera enterotoxin (ace) from Vibrio cholerae serotype O1 (strain ATCC 39315 / El Tor Inaba N16961).